The following is a 444-amino-acid chain: E1B 55 kDa protein (444 aa).

Residues M1 to V27 are disordered. S438 and S439 each carry phosphoserine.

This sequence belongs to the adenoviridae E1B 55 kDa protein family. In terms of assembly, interacts with host PML-4 and PML-5; this interaction promotes efficient subnuclear targeting of E1B-55K to PML nuclear bodies. Interacts with E4-ORF3 protein. Interacts with E4-ORF6 protein.

The protein localises to the host nucleus. It localises to the host cytoplasm. Functionally, plays a major role to prevent cellular inhibition of viral genome replication. Assembles an SCF-like E3 ubiquitin ligase complex based on the cellular proteins ELOB, ELOC, CUL5 and RBX1, in cooperation with viral E4orf6. This viral RING-type ligase ubiquitinates cellular substrates and targets them to proteasomal degradation: TP53/p53, LIG4, MRE11-RAD50-NBS1 (MRN) complex, ITGA3, DAXX and BLM. E1B-55K probably acts as the substrate-specific adapter of the SCF-like E3 ubiquitin ligase complex. Degradation of host TP53/p53 activity is essential for preventing E1A-induced TP53 accumulation that would otherwise lead to cell apoptosis and growth arrest. E1B-55K also inactivates TP53 transcription-factor activity by binding its transactivation domain. E1B-55K also functions as a SUMO1 E3 ligase for TP53 which causes the latter to be sequestered in promyelocytic leukemia (PML) nuclear bodies thereby contributing to maximal inhibition of TP53 function. This is E1B 55 kDa protein from Canis lupus familiaris (Dog).